A 195-amino-acid polypeptide reads, in one-letter code: 7-methyl-GTP pyrophosphatase (195 aa).

The Proton acceptor role is filled by Asp70.

This sequence belongs to the Maf family. YceF subfamily. Requires a divalent metal cation as cofactor.

Its subcellular location is the cytoplasm. The catalysed reaction is N(7)-methyl-GTP + H2O = N(7)-methyl-GMP + diphosphate + H(+). Its function is as follows. Nucleoside triphosphate pyrophosphatase that hydrolyzes 7-methyl-GTP (m(7)GTP). May have a dual role in cell division arrest and in preventing the incorporation of modified nucleotides into cellular nucleic acids. This Shewanella sp. (strain MR-7) protein is 7-methyl-GTP pyrophosphatase.